A 178-amino-acid chain; its full sequence is CASP-like protein 2A2 (178 aa).

Residues 1 to 22 (MDKTDQTAIDESALVLNRTEKS) are Cytoplasmic-facing. The chain crosses the membrane as a helical span at residues 23–43 (AEAVLRVASMALSITGLVIMI). Residues 44–69 (KNSISNEFGSVSYSNIGAFMYLVSAN) are Extracellular-facing. The chain crosses the membrane as a helical span at residues 70-90 (GVCAAYSLLSALAILALPCPI). The Cytoplasmic segment spans residues 91–96 (SKVQVR). A helical membrane pass occupies residues 97–117 (TLFLLDQVVTYVVLAAGAVSA). Topologically, residues 118 to 145 (ETVYLAYYGNIPITWSSACDSYGSFCHN) are extracellular. The chain crosses the membrane as a helical span at residues 146-166 (ALISVVFTFVVSLLYMLLSLI). Residues 167-178 (SSYRLFTRFEAP) lie on the Cytoplasmic side of the membrane.

Belongs to the Casparian strip membrane proteins (CASP) family. As to quaternary structure, homodimer and heterodimers. As to expression, mostly expressed in flowers and buds and, to a lower extent, in roots and yellow siliques. Localized in the floral organ abscission zone.

The protein resides in the cell membrane. In terms of biological role, involved in floral organ shedding. This chain is CASP-like protein 2A2, found in Arabidopsis thaliana (Mouse-ear cress).